The following is a 294-amino-acid chain: tRNA pseudouridine synthase B (294 aa).

Catalysis depends on aspartate 39, which acts as the Nucleophile.

It belongs to the pseudouridine synthase TruB family. Type 1 subfamily.

The enzyme catalyses uridine(55) in tRNA = pseudouridine(55) in tRNA. In terms of biological role, responsible for synthesis of pseudouridine from uracil-55 in the psi GC loop of transfer RNAs. This chain is tRNA pseudouridine synthase B, found in Streptococcus agalactiae serotype Ia (strain ATCC 27591 / A909 / CDC SS700).